Consider the following 244-residue polypeptide: 14-3-3 protein beta/alpha-A (244 aa).

Methionine 1 bears the N-acetylmethionine mark.

It belongs to the 14-3-3 family. Homodimer, and heterodimer with other family members.

It localises to the cytoplasm. Functionally, adapter protein implicated in the regulation of a large spectrum of both general and specialized signaling pathways. Binds to a large number of partners, usually by recognition of a phosphoserine or phosphothreonine motif. Binding generally results in the modulation of the activity of the binding partner. This Xenopus laevis (African clawed frog) protein is 14-3-3 protein beta/alpha-A (ywhab-a).